Reading from the N-terminus, the 288-residue chain is ATP synthase gamma chain (288 aa).

It belongs to the ATPase gamma chain family. In terms of assembly, F-type ATPases have 2 components, CF(1) - the catalytic core - and CF(0) - the membrane proton channel. CF(1) has five subunits: alpha(3), beta(3), gamma(1), delta(1), epsilon(1). CF(0) has three main subunits: a, b and c.

Its subcellular location is the cell inner membrane. In terms of biological role, produces ATP from ADP in the presence of a proton gradient across the membrane. The gamma chain is believed to be important in regulating ATPase activity and the flow of protons through the CF(0) complex. This is ATP synthase gamma chain from Polaromonas sp. (strain JS666 / ATCC BAA-500).